The chain runs to 642 residues: Chaperone protein DnaK (642 aa).

T200 is modified (phosphothreonine; by autocatalysis). Over residues E600–P616 the composition is skewed to low complexity. Residues E600 to K642 are disordered. Positions D623–D634 are enriched in basic and acidic residues.

This sequence belongs to the heat shock protein 70 family.

Acts as a chaperone. The polypeptide is Chaperone protein DnaK (Akkermansia muciniphila (strain ATCC BAA-835 / DSM 22959 / JCM 33894 / BCRC 81048 / CCUG 64013 / CIP 107961 / Muc)).